Here is a 267-residue protein sequence, read N- to C-terminus: Undecaprenyl-diphosphatase (267 aa).

7 helical membrane-spanning segments follow: residues 7–29, 41–61, 69–89, 96–116, 173–193, 207–227, and 239–259; these read LILG…HMIL, FWKS…IFVF, LDIW…GLFV, LFNG…FILI, AAEF…AYSI, IPLG…IKFF, and FGIY…SGIL.

Belongs to the UppP family.

The protein localises to the cell inner membrane. The catalysed reaction is di-trans,octa-cis-undecaprenyl diphosphate + H2O = di-trans,octa-cis-undecaprenyl phosphate + phosphate + H(+). In terms of biological role, catalyzes the dephosphorylation of undecaprenyl diphosphate (UPP). Confers resistance to bacitracin. In Campylobacter jejuni subsp. jejuni serotype O:6 (strain 81116 / NCTC 11828), this protein is Undecaprenyl-diphosphatase.